Consider the following 523-residue polypeptide: ADP-ribosylation factor GTPase-activating protein 3 (523 aa).

An Arf-GAP domain is found at 10-126 (LAIFKRLRSV…IKTLATQATR (117 aa)). The C4-type zinc-finger motif lies at 25–48 (CFDCGAKNPSWASISYGVFLCIDC). Residues 162 to 206 (GAMQASAQPESASSTPWGLETTPEKHEGGPGQGPSVEGLNTPGKA) form a disordered region. Residues 164–177 (MQASAQPESASSTP) show a composition bias toward polar residues. 2 positions are modified to phosphoserine: Ser-231 and Ser-241. The tract at residues 248–269 (QAQAVDKRKEQEDLARGAPKEE) is disordered. Phosphoserine occurs at positions 270, 274, and 331. Residues 308–424 (GFGSCRSGIS…YEPIGSTDEA (117 aa)) form a disordered region. The segment covering 314–332 (SGISHSVTSDMQTIEQESP) has biased composition (polar residues). Residues 348-361 (SYFSSSSKWSEQSS) are compositionally biased toward low complexity. The residue at position 377 (Ser-377) is a Phosphoserine. A compositionally biased stretch (basic and acidic residues) spans 385 to 396 (YWKKDSSRDPEP). 6 positions are modified to phosphoserine: Ser-435, Ser-458, Ser-460, Ser-462, Ser-464, and Ser-465.

Its subcellular location is the cytoplasm. The protein localises to the golgi apparatus membrane. With respect to regulation, GAP activity stimulated by phosphatidylinositol 4,5-bisphosphate (PIP2). In terms of biological role, GTPase-activating protein (GAP) for ADP ribosylation factor 1 (ARF1). Hydrolysis of ARF1-bound GTP may lead to dissociation of coatomer from Golgi-derived membranes to allow fusion with target membranes. The sequence is that of ADP-ribosylation factor GTPase-activating protein 3 (Arfgap3) from Mus musculus (Mouse).